We begin with the raw amino-acid sequence, 119 residues long: uncharacterized protein (119 aa).

This is an uncharacterized protein from Lactococcus lactis subsp. lactis (strain IL1403) (Streptococcus lactis).